The following is a 487-amino-acid chain: Glutamyl-tRNA(Gln) amidotransferase subunit A (487 aa).

Active-site charge relay system residues include Lys79 and Ser154. The active-site Acyl-ester intermediate is Ser178.

This sequence belongs to the amidase family. GatA subfamily. In terms of assembly, heterotrimer of A, B and C subunits.

The catalysed reaction is L-glutamyl-tRNA(Gln) + L-glutamine + ATP + H2O = L-glutaminyl-tRNA(Gln) + L-glutamate + ADP + phosphate + H(+). Its function is as follows. Allows the formation of correctly charged Gln-tRNA(Gln) through the transamidation of misacylated Glu-tRNA(Gln) in organisms which lack glutaminyl-tRNA synthetase. The reaction takes place in the presence of glutamine and ATP through an activated gamma-phospho-Glu-tRNA(Gln). The sequence is that of Glutamyl-tRNA(Gln) amidotransferase subunit A from Moorella thermoacetica (strain ATCC 39073 / JCM 9320).